The following is a 316-amino-acid chain: Probable 5-dehydro-4-deoxyglucarate dehydratase (316 aa).

Belongs to the DapA family.

It carries out the reaction 5-dehydro-4-deoxy-D-glucarate + H(+) = 2,5-dioxopentanoate + CO2 + H2O. It participates in carbohydrate acid metabolism; D-glucarate degradation; 2,5-dioxopentanoate from D-glucarate: step 2/2. The chain is Probable 5-dehydro-4-deoxyglucarate dehydratase from Corynebacterium glutamicum (strain ATCC 13032 / DSM 20300 / JCM 1318 / BCRC 11384 / CCUG 27702 / LMG 3730 / NBRC 12168 / NCIMB 10025 / NRRL B-2784 / 534).